The chain runs to 380 residues: Homoserine O-succinyltransferase (380 aa).

The AB hydrolase-1 domain occupies 49 to 357 (NAILICHALS…ESTHGHDAFL (309 aa)). The active-site Nucleophile is Ser155. Residue Arg225 participates in substrate binding. Active-site residues include Asp320 and His353. Asp354 lines the substrate pocket.

This sequence belongs to the AB hydrolase superfamily. MetX family. In terms of assembly, homodimer.

It localises to the cytoplasm. The catalysed reaction is L-homoserine + succinyl-CoA = O-succinyl-L-homoserine + CoA. It functions in the pathway amino-acid biosynthesis; L-methionine biosynthesis via de novo pathway; O-succinyl-L-homoserine from L-homoserine: step 1/1. Its function is as follows. Transfers a succinyl group from succinyl-CoA to L-homoserine, forming succinyl-L-homoserine. The sequence is that of Homoserine O-succinyltransferase from Laribacter hongkongensis (strain HLHK9).